A 92-amino-acid polypeptide reads, in one-letter code: Large ribosomal subunit protein bL28 (92 aa).

Residues 1–34 (MGRECEITGKKTMFGNNVPRKGLSRKKGGGGQHI) form a disordered region.

This sequence belongs to the bacterial ribosomal protein bL28 family.

This is Large ribosomal subunit protein bL28 from Borrelia turicatae (strain 91E135).